We begin with the raw amino-acid sequence, 625 residues long: Vacuolar-sorting receptor 7 (625 aa).

Positions 1-26 (MGLVNGRASLTFLLAALTIIAMVVEA) are cleaved as a signal peptide. Over 27–564 (RFVVEKESIS…CIERYGSKTA (538 aa)) the chain is Lumenal. One can recognise a PA domain in the interval 58-166 (DYGGFLIGSV…SFGDDLRQGF (109 aa)). N-linked (GlcNAc...) asparagine glycans are attached at residues N292, N400, and N432. EGF-like domains lie at 414 to 464 (ETNE…TSCT) and 467 to 513 (GPAR…LTCE). 7 cysteine pairs are disulfide-bonded: C418-C436, C425-C445, C447-C463, C471-C491, C478-C499, C501-C512, and C542-C555. An EGF-like 3; calcium-binding domain is found at 514–556 (DINECKERSVCQCSGCRCKNSWGGYKCSCSGDRLYINDQDTCI). The helical transmembrane segment at 565-585 (WWLTFLILAIVAVAGLAGYIF) threads the bilayer. Over 586–625 (YKYRFRSYMDSEIMTIMSQYMPLESQRAREVPSEAEPFTL) the chain is Cytoplasmic. The Tyrosine-based internalization motif motif lies at 605 to 608 (YMPL).

The protein belongs to the VSR (BP-80) family. As to expression, expressed at low levels in seedlings, roots, young leaves, flowers and siliques.

Its subcellular location is the golgi apparatus membrane. In terms of biological role, vacuolar-sorting receptor (VSR) involved in clathrin-coated vesicles sorting from Golgi apparatus to vacuoles. The polypeptide is Vacuolar-sorting receptor 7 (VSR7) (Arabidopsis thaliana (Mouse-ear cress)).